A 455-amino-acid chain; its full sequence is Tubulin delta chain (455 aa).

GTP is bound at residue 143 to 149; that stretch reads AGGTGSG.

It belongs to the tubulin family. Found in a complex with TEDC1, TEDC2, TUBE1 and TUBD1. Highly expressed in testis.

The protein localises to the cell projection. It localises to the cilium. The protein resides in the cytoplasm. It is found in the cytoskeleton. Its subcellular location is the microtubule organizing center. The protein localises to the centrosome. It localises to the centriole. The protein resides in the nucleus. Its function is as follows. Acts as a positive regulator of hedgehog signaling and regulates ciliary function. The chain is Tubulin delta chain (Tubd1) from Mus musculus (Mouse).